A 1012-amino-acid polypeptide reads, in one-letter code: Ubiquitin-like modifier-activating enzyme 7 (1012 aa).

Residues 23–159 (GSPAMQRIQG…DTRGLVGQLF (137 aa)) form a 1-1 repeat. A 2 approximate repeats region spans residues 23-575 (GSPAMQRIQG…GTWGSATVFM (553 aa)). At Ser266 the chain carries Phosphoserine. A 1-2 repeat occupies 423–575 (GAGFQEKLRR…GTWGSATVFM (153 aa)). Position 442–471 (442–471 (AIGCELLKVFALVGLGAGNSGGLTVVDMDH)) interacts with ATP. Catalysis depends on Cys599, which acts as the Glycyl thioester intermediate.

The protein belongs to the ubiquitin-activating E1 family. In terms of assembly, (Microbial infection) Interacts with human cytomegalovirus proteins NEC2/UL50 and UL26; these interactions inhibit ISGylation and cause proteasomal degradation of UBA7. As to quaternary structure, (Microbial infection) Interacts with rotavirus non-structural protein 5 (NSP5); this interaction promotes UBA7 proteasomal degradation. Monomer. Binds and is involved in the conjugation of G1P2/ISG15. Post-translationally, ISGylated. In terms of processing, ubiquitinated by RNF170. As to expression, expressed in a variety of normal and tumor cell types, but is reduced in lung cancer cell lines.

The protein resides in the cytoplasm. The protein localises to the nucleus. It functions in the pathway protein modification; protein ubiquitination. E1-activating enzyme that catalyzes the covalent conjugation of the ubiquitin-like protein product of ISG15 to additional interferon stimulated proteins (ISGs) as well as other cellular proteins such as P53 in a process termed protein ISGylation. Plays an essential role in antiviral immunity together with ISG15 by restricting the replication of many viruses including rabies virus, influenza virus, sindbis virus, rotavirus or human cytomegalovirus. For example, ISG15 modification of influenza A protein NS1 disrupts the association of the NS1 with importin-alpha leading to NS1 nuclear import inhibition. ISGylation of human cytomegalovirs protein UL26 regulates its stability and inhibits its activities to suppress NF-kappa-B signaling. This is Ubiquitin-like modifier-activating enzyme 7 from Homo sapiens (Human).